The following is a 456-amino-acid chain: MALSQAVTSRASVFKSKTWIDTGYRLHSRENKPFMVSSLLEEPSLVVLPPSMTTELILAKETDLSFWHALDDIVFSEHAFYSTRILSLPLQTTIIRRHLASGAQRFMPAVVRQLRNTLDREWGSGKPKQWRSVNLFNSLLNVVNNMVSVVFVGTDLANDQDFQTSITKHTEQVFLTMSVLRMEVESKLMPLIMERLKNSSELKAGQDKPDDLLQWLIDCQTSLKDPAERAIELEPSLIVTRVLMSYFVSVFLVNVALFNAVSIMGRLPEADYWSEIYTEARKILDVDEHGWTKEKVDKLWKTESFVKETMRFVGDACFEMRRKVMAPTGINLSDGTHLPFGTTVGLPSNAIHNDDRFYPQATSFDGLRFLKLRESDDGNTARGSLLTATSNTFLQFGHGRHGCPGRFLAADILKLILAEMTLRYEIKWDEKPEESSWFGNSLLPGQNTVVSVCPRD.

A helical transmembrane segment spans residues 243–263 (LMSYFVSVFLVNVALFNAVSI). Heme is bound at residue cysteine 403.

The protein belongs to the cytochrome P450 family. Heme is required as a cofactor.

Its subcellular location is the membrane. Its pathway is secondary metabolite biosynthesis. In terms of biological role, cytochrome P450 monooxygenase; part of the cluster that mediates the biosynthesis of a highly modified cyclo-arginine-tryptophan dipeptide (cRW). The first step of the pathway is perfornmed by the arginine-containing cyclodipeptide synthase (RCPDS) avaA that acts as the scaffold-generating enzyme and is responsible for formation of the cyclo-Arg-Trp (cRW) diketopiperazine. AvaB then acts as a multifunctional flavoenzyme that is responsible for generating the cyclo-Arg-formylkynurenine DKP, which can be deformylated by avaC. AvaB then further catalyzes an additional N-oxidation followed by cyclization and dehydration. The next step is an N-acetylation of the guanidine group catalyzed by the arginine N-acetyltransferase avaD. The roles of the additional enzymes identified within the ava cluster still have to be determined. This Aspergillus versicolor protein is Cytochrome P450 monooxygenase avaH.